The following is a 78-amino-acid chain: Neurogranin (78 aa).

Position 1 is an N-acetylmethionine (Met-1). The IQ domain occupies 26 to 49 (ANAAAAKIQASFRGHMARKKIKSG). Residue Ser-36 is modified to Phosphoserine; by PHK and PKC. The tract at residues 38 to 78 (RGHMARKKIKSGERGRKGPGPGGPGGAGGARGGAGGGPSGD) is disordered. One can recognise a Collagen-like domain in the interval 50 to 78 (ERGRKGPGPGGPGGAGGARGGAGGGPSGD). Positions 55 to 78 (GPGPGGPGGAGGARGGAGGGPSGD) are enriched in gly residues. A Citrulline; partial modification is found at Arg-68. Arg-68 carries the omega-N-methylarginine modification.

It belongs to the neurogranin family. In terms of processing, the N-terminus is blocked. Phosphorylated at Ser-36 by PHK and PKC. Phosphorylation prevents interaction with Calmodulin and interrupts several learning- and memory-associated functions. As to expression, is highly enriched in brain. Accumulates postsynaptically in dendritic spines of neostriatal neurons.

Acts as a 'third messenger' substrate of protein kinase C-mediated molecular cascades during synaptic development and remodeling. Binds to calmodulin in the absence of calcium. This Bos taurus (Bovine) protein is Neurogranin (NRGN).